The following is a 36-amino-acid chain: Light-harvesting protein B-1015 gamma chain (36 aa).

One of the components of the bacteriochlorophyll-protein complex in the chromatophore membrane. The polypeptide is Light-harvesting protein B-1015 gamma chain (Blastochloris viridis (Rhodopseudomonas viridis)).